Here is a 242-residue protein sequence, read N- to C-terminus: Ferritin, mitochondrial (242 aa).

Residues 1-49 constitute a mitochondrion transit peptide; that stretch reads MLPCSLFLPKHISTSLVFLRSARHGFALLPRWVPRLSSDYPPAAPIRLL. The Ferritin-like diiron domain occupies 70–219; the sequence is QNFHPDSEAA…DHVNNLVKMG (150 aa). Residues glutamate 87, glutamate 122, histidine 125, glutamate 167, and glutamine 201 each coordinate Fe cation.

It belongs to the ferritin family. As to quaternary structure, homooligomer of 24 subunits. The functional molecule is roughly spherical and contains a central cavity into which the polymeric mineral iron core is deposited.

The protein localises to the mitochondrion. The catalysed reaction is 4 Fe(2+) + O2 + 4 H(+) = 4 Fe(3+) + 2 H2O. In terms of biological role, catalyzes the oxidation of ferrous iron(II) to ferric iron(III) and stores iron in a soluble, non-toxic, readily available form. Important for iron homeostasis. Iron is taken up in the ferrous form and deposited as ferric hydroxides after oxidation. This chain is Ferritin, mitochondrial, found in Bos taurus (Bovine).